A 325-amino-acid polypeptide reads, in one-letter code: NADH-quinone oxidoreductase subunit H (325 aa).

8 helical membrane passes run 5-25 (LIII…AAAY), 75-95 (FVYW…FVLI), 117-137 (VGVV…VLAG), 157-177 (ISYE…TGTL), 190-210 (WLIW…FAET), 240-260 (FFLG…TLFF), 268-288 (DIPI…FMWV), and 305-325 (WKVL…FTLV).

It belongs to the complex I subunit 1 family. In terms of assembly, NDH-1 is composed of 14 different subunits. Subunits NuoA, H, J, K, L, M, N constitute the membrane sector of the complex.

It is found in the cell inner membrane. It carries out the reaction a quinone + NADH + 5 H(+)(in) = a quinol + NAD(+) + 4 H(+)(out). NDH-1 shuttles electrons from NADH, via FMN and iron-sulfur (Fe-S) centers, to quinones in the respiratory chain. The immediate electron acceptor for the enzyme in this species is believed to be ubiquinone. Couples the redox reaction to proton translocation (for every two electrons transferred, four hydrogen ions are translocated across the cytoplasmic membrane), and thus conserves the redox energy in a proton gradient. This subunit may bind ubiquinone. The sequence is that of NADH-quinone oxidoreductase subunit H from Protochlamydia amoebophila (strain UWE25).